Consider the following 362-residue polypeptide: S-adenosylmethionine:tRNA ribosyltransferase-isomerase (362 aa).

The protein belongs to the QueA family. Monomer.

The protein resides in the cytoplasm. It carries out the reaction 7-aminomethyl-7-carbaguanosine(34) in tRNA + S-adenosyl-L-methionine = epoxyqueuosine(34) in tRNA + adenine + L-methionine + 2 H(+). It functions in the pathway tRNA modification; tRNA-queuosine biosynthesis. Functionally, transfers and isomerizes the ribose moiety from AdoMet to the 7-aminomethyl group of 7-deazaguanine (preQ1-tRNA) to give epoxyqueuosine (oQ-tRNA). This chain is S-adenosylmethionine:tRNA ribosyltransferase-isomerase, found in Xanthobacter autotrophicus (strain ATCC BAA-1158 / Py2).